Reading from the N-terminus, the 111-residue chain is Large ribosomal subunit protein uL22 (111 aa).

It belongs to the universal ribosomal protein uL22 family. Part of the 50S ribosomal subunit.

In terms of biological role, this protein binds specifically to 23S rRNA; its binding is stimulated by other ribosomal proteins, e.g. L4, L17, and L20. It is important during the early stages of 50S assembly. It makes multiple contacts with different domains of the 23S rRNA in the assembled 50S subunit and ribosome. The globular domain of the protein is located near the polypeptide exit tunnel on the outside of the subunit, while an extended beta-hairpin is found that lines the wall of the exit tunnel in the center of the 70S ribosome. The polypeptide is Large ribosomal subunit protein uL22 (Chlamydia caviae (strain ATCC VR-813 / DSM 19441 / 03DC25 / GPIC) (Chlamydophila caviae)).